We begin with the raw amino-acid sequence, 126 residues long: Fluoride-specific ion channel FluC (126 aa).

4 helical membrane-spanning segments follow: residues F3–V23, I37–V57, V70–V90, and N104–M124. 2 residues coordinate Na(+): G77 and T80.

The protein belongs to the fluoride channel Fluc/FEX (TC 1.A.43) family.

The protein resides in the cell inner membrane. It catalyses the reaction fluoride(in) = fluoride(out). With respect to regulation, na(+) is not transported, but it plays an essential structural role and its presence is essential for fluoride channel function. In terms of biological role, fluoride-specific ion channel. Important for reducing fluoride concentration in the cell, thus reducing its toxicity. The sequence is that of Fluoride-specific ion channel FluC from Vibrio cholerae serotype O1 (strain ATCC 39541 / Classical Ogawa 395 / O395).